We begin with the raw amino-acid sequence, 396 residues long: Subtilisin-like protease 5 (396 aa).

A signal peptide spans 1 to 20 (MTGFFTILSFSLAALSVTNA). A propeptide spanning residues 21–116 (AQILSVPKGA…VEPDAIISQH (96 aa)) is cleaved from the precursor. The Inhibitor I9 domain maps to 37-113 (YIVVMKDDTS…VAFVEPDAII (77 aa)). In terms of domain architecture, Peptidase S8 spans 125–396 (PWGLSRLSNR…SRLLYNGSGR (272 aa)). Catalysis depends on charge relay system residues Asp-156 and His-187. Asn-230 and Asn-248 each carry an N-linked (GlcNAc...) asparagine glycan. Residue Ser-342 is the Charge relay system of the active site. Residues 376-389 (PTIRNPGPDTTSRL) are compositionally biased toward polar residues. The segment at 376 to 396 (PTIRNPGPDTTSRLLYNGSGR) is disordered. An N-linked (GlcNAc...) asparagine glycan is attached at Asn-392.

This sequence belongs to the peptidase S8 family.

The protein resides in the secreted. In terms of biological role, secreted subtilisin-like serine protease with keratinolytic activity that contributes to pathogenicity. The polypeptide is Subtilisin-like protease 5 (SUB5) (Arthroderma benhamiae (strain ATCC MYA-4681 / CBS 112371) (Trichophyton mentagrophytes)).